A 417-amino-acid chain; its full sequence is UDP-N-acetylglucosamine 1-carboxyvinyltransferase (417 aa).

22 to 23 (KN) lines the phosphoenolpyruvate pocket. Position 91 (Arg-91) interacts with UDP-N-acetyl-alpha-D-glucosamine. The active-site Proton donor is Cys-115. Position 115 is a 2-(S-cysteinyl)pyruvic acid O-phosphothioketal (Cys-115). Residues 120 to 124 (RPVDQ), Asp-304, and Ile-326 contribute to the UDP-N-acetyl-alpha-D-glucosamine site.

This sequence belongs to the EPSP synthase family. MurA subfamily.

It is found in the cytoplasm. It catalyses the reaction phosphoenolpyruvate + UDP-N-acetyl-alpha-D-glucosamine = UDP-N-acetyl-3-O-(1-carboxyvinyl)-alpha-D-glucosamine + phosphate. It functions in the pathway cell wall biogenesis; peptidoglycan biosynthesis. Its function is as follows. Cell wall formation. Adds enolpyruvyl to UDP-N-acetylglucosamine. This chain is UDP-N-acetylglucosamine 1-carboxyvinyltransferase, found in Desulfovibrio desulfuricans (strain ATCC 27774 / DSM 6949 / MB).